The chain runs to 254 residues: MSLTNKNVVFVAGLGGIGLDTSRELVKRNLKNLVILDRIDNPAAIAELKAINPKVTITFYPYDVTVPVAETTKLLKTIFAQVKTIDVLINGAGILDDHQIERTIAVNYTGLVNTTTAILDFWDKRKGGPGGIICNIGSVTGFNAIYQVPVYSGSKAAVVNFTSSLAKLAPITGVTAYTVNPGITKTTLVHKFNSWLDVEPRVAEKLLEHPTQTSQQCAENFVKAIELNKNGAIWKLDLGTLEPITWTQHWDSGI.

10–33 (FVAGLGGIGLDTSRELVKRNLKNL) provides a ligand contact to NAD(+). S138 provides a ligand contact to substrate. The active-site Proton acceptor is the Y151.

This sequence belongs to the short-chain dehydrogenases/reductases (SDR) family. Homodimer.

The enzyme catalyses a primary alcohol + NAD(+) = an aldehyde + NADH + H(+). It carries out the reaction a secondary alcohol + NAD(+) = a ketone + NADH + H(+). In Drosophila pseudoobscura pseudoobscura (Fruit fly), this protein is Alcohol dehydrogenase (Adh).